The primary structure comprises 300 residues: ETS homologous factor (300 aa).

The PNT domain maps to 29–115; that stretch reads PTCNVSSGFF…SNLQHLKWNG (87 aa). Residues 181-203 form a disordered region; it reads VAESPDMKKEQDHPVKSHTKKHN. Basic and acidic residues predominate over residues 185-195; the sequence is PDMKKEQDHPV. Residues 207–289 constitute a DNA-binding region (ETS); sequence THLWEFIRDI…DGRRLVYKFG (83 aa).

It belongs to the ETS family. As to expression, highly expressed in kidney and lung, weakly in skeletal muscle, heart, and liver, and not detected in brain, spleen or testis.

The protein resides in the nucleus. Transcriptional activator that may play a role in regulating epithelial cell differentiation and proliferation. May act as a repressor for a specific subset of ETS/AP-1-responsive genes, and as a modulator of the nuclear response to mitogen-activated protein kinase signaling cascades. Binds to DNA sequences containing the consensus nucleotide core sequence GGAA. Involved in regulation of TNFRSF10B/DR5 expression through Ets-binding sequences on the TNFRSF10B/DR5 promoter. This Mus musculus (Mouse) protein is ETS homologous factor.